A 201-amino-acid polypeptide reads, in one-letter code: Small ribosomal subunit protein uS4c (201 aa).

Residues 15–44 (LGALPGLTSKRPRSGSDLRNQSRSGKKSQY) are disordered. Residues 89–150 (MRLDNILFRL…EQRSRALIQN (62 aa)) form the S4 RNA-binding domain.

The protein belongs to the universal ribosomal protein uS4 family. Part of the 30S ribosomal subunit. Contacts protein S5. The interaction surface between S4 and S5 is involved in control of translational fidelity.

It is found in the plastid. The protein localises to the chloroplast. Its function is as follows. One of the primary rRNA binding proteins, it binds directly to 16S rRNA where it nucleates assembly of the body of the 30S subunit. In terms of biological role, with S5 and S12 plays an important role in translational accuracy. In Calycanthus floridus var. glaucus (Eastern sweetshrub), this protein is Small ribosomal subunit protein uS4c (rps4).